The sequence spans 338 residues: Glycerol-3-phosphate dehydrogenase [NAD(P)+] (338 aa).

NADPH contacts are provided by Ser-13, Trp-14, and Lys-108. Sn-glycerol 3-phosphate is bound by residues Lys-108, Gly-139, and Ser-141. Ala-143 lines the NADPH pocket. Residues Lys-194, Asp-247, Ser-257, Arg-258, and Asn-259 each contribute to the sn-glycerol 3-phosphate site. Residue Lys-194 is the Proton acceptor of the active site. Arg-258 provides a ligand contact to NADPH. NADPH-binding residues include Val-282 and Glu-284.

The protein belongs to the NAD-dependent glycerol-3-phosphate dehydrogenase family.

It is found in the cytoplasm. The enzyme catalyses sn-glycerol 3-phosphate + NAD(+) = dihydroxyacetone phosphate + NADH + H(+). It carries out the reaction sn-glycerol 3-phosphate + NADP(+) = dihydroxyacetone phosphate + NADPH + H(+). Its pathway is membrane lipid metabolism; glycerophospholipid metabolism. Functionally, catalyzes the reduction of the glycolytic intermediate dihydroxyacetone phosphate (DHAP) to sn-glycerol 3-phosphate (G3P), the key precursor for phospholipid synthesis. The polypeptide is Glycerol-3-phosphate dehydrogenase [NAD(P)+] (Listeria innocua serovar 6a (strain ATCC BAA-680 / CLIP 11262)).